The chain runs to 555 residues: Glucose-6-phosphate isomerase (555 aa).

Catalysis depends on Glu-356, which acts as the Proton donor. Catalysis depends on residues His-387 and Lys-515.

It belongs to the GPI family.

It is found in the cytoplasm. The catalysed reaction is alpha-D-glucose 6-phosphate = beta-D-fructose 6-phosphate. It participates in carbohydrate biosynthesis; gluconeogenesis. The protein operates within carbohydrate degradation; glycolysis; D-glyceraldehyde 3-phosphate and glycerone phosphate from D-glucose: step 2/4. In terms of biological role, catalyzes the reversible isomerization of glucose-6-phosphate to fructose-6-phosphate. The sequence is that of Glucose-6-phosphate isomerase from Desulforapulum autotrophicum (strain ATCC 43914 / DSM 3382 / VKM B-1955 / HRM2) (Desulfobacterium autotrophicum).